Here is a 184-residue protein sequence, read N- to C-terminus: Orotate phosphoribosyltransferase (184 aa).

5-phospho-alpha-D-ribose 1-diphosphate contacts are provided by residues arginine 99, lysine 100, lysine 103, histidine 105, and 125 to 133; that span reads EDTTTTGNS. 2 residues coordinate orotate: threonine 129 and arginine 157.

The protein belongs to the purine/pyrimidine phosphoribosyltransferase family. PyrE subfamily. As to quaternary structure, homodimer. Mg(2+) serves as cofactor.

It carries out the reaction orotidine 5'-phosphate + diphosphate = orotate + 5-phospho-alpha-D-ribose 1-diphosphate. It participates in pyrimidine metabolism; UMP biosynthesis via de novo pathway; UMP from orotate: step 1/2. Catalyzes the transfer of a ribosyl phosphate group from 5-phosphoribose 1-diphosphate to orotate, leading to the formation of orotidine monophosphate (OMP). The chain is Orotate phosphoribosyltransferase from Corynebacterium glutamicum (strain ATCC 13032 / DSM 20300 / JCM 1318 / BCRC 11384 / CCUG 27702 / LMG 3730 / NBRC 12168 / NCIMB 10025 / NRRL B-2784 / 534).